Reading from the N-terminus, the 142-residue chain is MATKIDKEACRAAYNLVRDDGSAVIWVTFRYDGATIVPGDQGADYQHFIQQCTDDVRLFAFVRFTTGDAMSKRSKFALITWIGEDVSGLQRAKTGTDKTLVKEVVQNFAKEFVISDRKELEEDFIRSELKKAGGANYDAQSE.

Residue alanine 2 is modified to N-acetylalanine. One can recognise an ADF-H domain in the interval 2 to 130 (ATKIDKEACR…EEDFIRSELK (129 aa)). Residues 66-75 (TGDAMSKRSK) form a flexible and important for F-actin binding region. Lysine 102 carries the N6-acetyllysine modification. Residue serine 141 is modified to Phosphoserine.

It belongs to the actin-binding proteins ADF family. Coactosin subfamily. Interacts with 5-lipoxygenase (ALOX5/5LO) in a calcium-independent manner. Binds to F-actin with a stoichiometry of 1:2.

The protein localises to the cytoplasm. Its subcellular location is the cytoskeleton. It is found in the nucleus. Its function is as follows. Binds to F-actin in a calcium-independent manner. Has no direct effect on actin depolymerization. Acts as a chaperone for ALOX5 (5LO), influencing both its stability and activity in leukotrienes synthesis. This is Coactosin-like protein (Cotl1) from Mus musculus (Mouse).